Here is a 295-residue protein sequence, read N- to C-terminus: Tissue factor (295 aa).

The N-terminal stretch at Met1 to Ala32 is a signal peptide. At Ser33–Glu251 the chain is on the extracellular side. 2 short sequence motifs (WKS motif) span residues Trp46 to Ser48 and Trp77 to Ser79. Cys81 and Cys89 are oxidised to a cystine. N-linked (GlcNAc...) asparagine glycosylation is found at Asn156 and Asn169. The WKS motif signature appears at Trp190–Ser192. Cys218 and Cys241 are oxidised to a cystine. Residues Ile252–Leu274 form a helical membrane-spanning segment. At His275–Ser295 the chain is on the cytoplasmic side. Cys277 is lipidated: S-palmitoyl cysteine.

The protein belongs to the tissue factor family. Interacts with HSPE; the interaction, inhibited by heparin, promotes the generation of activated factor X and activates coagulation in the presence of activated factor VII. In terms of tissue distribution, lung, placenta and pancreas.

The protein resides in the membrane. Its subcellular location is the secreted. In terms of biological role, initiates blood coagulation by forming a complex with circulating factor VII or VIIa. The [TF:VIIa] complex activates factors IX or X by specific limited proteolysis. TF plays a role in normal hemostasis by initiating the cell-surface assembly and propagation of the coagulation protease cascade. The protein is Tissue factor (F3) of Homo sapiens (Human).